Reading from the N-terminus, the 338-residue chain is 1-aminocyclopropane-1-carboxylate deaminase (338 aa).

Lys-51 carries the N6-(pyridoxal phosphate)lysine modification. Catalysis depends on Ser-78, which acts as the Nucleophile.

It belongs to the ACC deaminase/D-cysteine desulfhydrase family. Homotrimer. Requires pyridoxal 5'-phosphate as cofactor.

It catalyses the reaction 1-aminocyclopropane-1-carboxylate + H2O = 2-oxobutanoate + NH4(+). Catalyzes a cyclopropane ring-opening reaction, the irreversible conversion of 1-aminocyclopropane-1-carboxylate (ACC) to ammonia and alpha-ketobutyrate. Allows growth on ACC as a nitrogen source. The sequence is that of 1-aminocyclopropane-1-carboxylate deaminase from Paraburkholderia xenovorans (strain LB400).